The sequence spans 418 residues: Light-independent protochlorophyllide reductase subunit N (418 aa).

Residues C17, C42, and C103 each coordinate [4Fe-4S] cluster.

Belongs to the BchN/ChlN family. As to quaternary structure, protochlorophyllide reductase is composed of three subunits; ChlL, ChlN and ChlB. Forms a heterotetramer of two ChlB and two ChlN subunits. The cofactor is [4Fe-4S] cluster.

The enzyme catalyses chlorophyllide a + oxidized 2[4Fe-4S]-[ferredoxin] + 2 ADP + 2 phosphate = protochlorophyllide a + reduced 2[4Fe-4S]-[ferredoxin] + 2 ATP + 2 H2O. It participates in porphyrin-containing compound metabolism; chlorophyll biosynthesis (light-independent). Its function is as follows. Component of the dark-operative protochlorophyllide reductase (DPOR) that uses Mg-ATP and reduced ferredoxin to reduce ring D of protochlorophyllide (Pchlide) to form chlorophyllide a (Chlide). This reaction is light-independent. The NB-protein (ChlN-ChlB) is the catalytic component of the complex. The chain is Light-independent protochlorophyllide reductase subunit N from Prochlorococcus marinus (strain MIT 9303).